The sequence spans 208 residues: Large ribosomal subunit protein bL9 (208 aa).

The tract at residues 168–208 is disordered; it reads GKVEKGSCTEGESLELGSVDNDINSGNVDSNESEKQDSVSE. The span at 188–197 shows a compositional bias: polar residues; it reads NDINSGNVDS. The span at 199-208 shows a compositional bias: basic and acidic residues; it reads ESEKQDSVSE.

It belongs to the bacterial ribosomal protein bL9 family.

Its function is as follows. Binds to the 23S rRNA. In Ehrlichia chaffeensis (strain ATCC CRL-10679 / Arkansas), this protein is Large ribosomal subunit protein bL9.